The sequence spans 499 residues: MSALTDLTIAEARDGLRAKRFSARELTDAHLGAIEALNPRLNAYITVTPDQARAQAAAADRVLASGEAGALTGIPVASKDMFCSEGIRTTAGSRILENFVPPYESAVTERMLRDGAVILGKANLDEFAMGSANLTSAYGPVENPWKRHDDDAVLVPGGSSGGSAAAVAAHLALGATGTDTGGSIRQPASYCGIAGIKPTYGRCSRWGIVAYASSLDQAGPFARTVRDNAILLRSMAGHDPRDSTSAMREVPDFEAACQRGVKGLRIGLPREYVADGMSEEIRTLWQNGAAMLRAAGAEVVDVSLPHTKHALASYYIIAPAEASSNLARYDGVRFGHRSSDNRDLNDLYERSRAEGFGAEVKRRIMVGTYVLSAGYYDAYYLKAQKVRALIARDFAEAFRSVDALLTPTAPSAAFAQGETIDDPVAMYLNDVFTVPINLAGLPAMSIPAGLSTTGLPLGLQIIGRAFDEETVFAVSAALEQAAAFTHRPALRADTLNAGA.

Active-site charge relay system residues include Lys-79 and Ser-159. Ser-183 acts as the Acyl-ester intermediate in catalysis.

Belongs to the amidase family. GatA subfamily. Heterotrimer of A, B and C subunits.

It catalyses the reaction L-glutamyl-tRNA(Gln) + L-glutamine + ATP + H2O = L-glutaminyl-tRNA(Gln) + L-glutamate + ADP + phosphate + H(+). Its function is as follows. Allows the formation of correctly charged Gln-tRNA(Gln) through the transamidation of misacylated Glu-tRNA(Gln) in organisms which lack glutaminyl-tRNA synthetase. The reaction takes place in the presence of glutamine and ATP through an activated gamma-phospho-Glu-tRNA(Gln). In Granulibacter bethesdensis (strain ATCC BAA-1260 / CGDNIH1), this protein is Glutamyl-tRNA(Gln) amidotransferase subunit A.